A 438-amino-acid polypeptide reads, in one-letter code: Acid phosphatase type 7 (438 aa).

An N-terminal signal peptide occupies residues 1–23 (MSPFLGGWLFFCMLLPFSPGVQG). The Fe cation site is built by Asp141, Asp170, and Tyr173. Asp170 provides a ligand contact to Zn(2+). Asn205 is a binding site for Zn(2+). Asn211 carries an N-linked (GlcNAc...) asparagine glycan. Zn(2+) is bound by residues His286 and His333. His335 lines the Fe cation pocket. N-linked (GlcNAc...) asparagine glycans are attached at residues Asn350 and Asn404.

It belongs to the metallophosphoesterase superfamily. Purple acid phosphatase family. Fe cation is required as a cofactor. Zn(2+) serves as cofactor.

It localises to the secreted. The catalysed reaction is a phosphate monoester + H2O = an alcohol + phosphate. This chain is Acid phosphatase type 7, found in Mus musculus (Mouse).